Consider the following 88-residue polypeptide: Snakin-1 (88 aa).

The signal sequence occupies residues 1 to 25 (MKLFLLTLLLVTLVITPSLIQTTMA).

The protein belongs to the GASA family. Post-translationally, six disulfide bonds may be present. As to expression, expressed in tubers, stems, axillary and young floral buds, sepals, petals, stamens and carpels, but not in roots, stolons, shoot apex meristem or young leaves.

It localises to the secreted. The protein resides in the cell wall. In terms of biological role, has an antimicrobial activity. Causes a rapid aggregation of both Gram-positive and Gram-negative bacteria, but the antimicrobial activity is not correlated with the capacity to aggregate bacteria. This is Snakin-1 (SN1) from Solanum tuberosum (Potato).